A 688-amino-acid chain; its full sequence is Alpha-1,4-glucan:maltose-1-phosphate maltosyltransferase (688 aa).

Residues Lys289, Gln349, and Asp384 each contribute to the alpha-maltose 1-phosphate site. The active-site Nucleophile is Asp420. Residue Asn421 participates in alpha-maltose 1-phosphate binding. Glu449 acts as the Proton donor in catalysis. Residue 560 to 561 (KY) participates in alpha-maltose 1-phosphate binding.

It belongs to the glycosyl hydrolase 13 family. GlgE subfamily. In terms of assembly, homodimer.

It carries out the reaction alpha-maltose 1-phosphate + [(1-&gt;4)-alpha-D-glucosyl](n) = [(1-&gt;4)-alpha-D-glucosyl](n+2) + phosphate. Functionally, maltosyltransferase that uses maltose 1-phosphate (M1P) as the sugar donor to elongate linear or branched alpha-(1-&gt;4)-glucans. Is involved in a branched alpha-glucan biosynthetic pathway from trehalose, together with TreS, Mak and GlgB. This is Alpha-1,4-glucan:maltose-1-phosphate maltosyltransferase from Rhodospirillum rubrum (strain ATCC 11170 / ATH 1.1.1 / DSM 467 / LMG 4362 / NCIMB 8255 / S1).